We begin with the raw amino-acid sequence, 528 residues long: Apolipoprotein N-acyltransferase (528 aa).

5 helical membrane passes run 8-28, 69-89, 99-119, 178-198, and 203-223; these read IMLLAGWRRALLAIASGAVGA, AFWIGWLFGFGYFVAGLWWLG, FAWALPLAVLGLPAVLAVFYG, VLGLFGVSALAVFVFAAPALL, and GAKLGLALAGILFCGHLGYGA. Positions 241 to 490 constitute a CN hydrolase domain; it reads VQPNIDQAAK…EGVENATFTL (250 aa). Glu285 functions as the Proton acceptor in the catalytic mechanism. Lys349 is an active-site residue. Cys402 serves as the catalytic Nucleophile.

This sequence belongs to the CN hydrolase family. Apolipoprotein N-acyltransferase subfamily.

The protein resides in the cell inner membrane. It catalyses the reaction N-terminal S-1,2-diacyl-sn-glyceryl-L-cysteinyl-[lipoprotein] + a glycerophospholipid = N-acyl-S-1,2-diacyl-sn-glyceryl-L-cysteinyl-[lipoprotein] + a 2-acyl-sn-glycero-3-phospholipid + H(+). The protein operates within protein modification; lipoprotein biosynthesis (N-acyl transfer). In terms of biological role, catalyzes the phospholipid dependent N-acylation of the N-terminal cysteine of apolipoprotein, the last step in lipoprotein maturation. The chain is Apolipoprotein N-acyltransferase from Allorhizobium ampelinum (strain ATCC BAA-846 / DSM 112012 / S4) (Agrobacterium vitis (strain S4)).